Here is a 187-residue protein sequence, read N- to C-terminus: Dihydrofolate reductase (187 aa).

Residues Pro4–Lys185 form the DHFR domain. Residues Ile8 to Arg37 are involved in methotrexate binding. Residues Ala10 and Gly16–Asp22 each bind NADP(+). Glu31 to Gln36 contacts substrate. The residue at position 33 (Lys33) is an N6-acetyllysine; alternate. Lys33 is subject to N6-succinyllysine; alternate. Arg55–Thr57 contributes to the NADP(+) binding site. An involved in methotrexate binding region spans residues Ser60–Asp70. Arg71 is a binding site for substrate. NADP(+) contacts are provided by residues Ser77–Glu79 and Gly117–Glu124. Thr137 contributes to the methotrexate binding site.

The protein belongs to the dihydrofolate reductase family. In terms of assembly, homodimer.

Its subcellular location is the mitochondrion. The protein resides in the cytoplasm. The catalysed reaction is (6S)-5,6,7,8-tetrahydrofolate + NADP(+) = 7,8-dihydrofolate + NADPH + H(+). It functions in the pathway cofactor biosynthesis; tetrahydrofolate biosynthesis; 5,6,7,8-tetrahydrofolate from 7,8-dihydrofolate: step 1/1. Its function is as follows. Key enzyme in folate metabolism. Contributes to the de novo mitochondrial thymidylate biosynthesis pathway. Catalyzes an essential reaction for de novo glycine and purine synthesis, and for DNA precursor synthesis. Binds its own mRNA. In Mesocricetus auratus (Golden hamster), this protein is Dihydrofolate reductase (DHFR).